Consider the following 162-residue polypeptide: Peptide deformylase-like (162 aa).

The protein belongs to the polypeptide deformylase family.

The polypeptide is Peptide deformylase-like (Staphylococcus aureus (strain MRSA252)).